The following is a 313-amino-acid chain: Putative phosphoribosylaminoimidazole-succinocarboxamide synthase 2 (313 aa).

It belongs to the SAICAR synthetase family.

It carries out the reaction 5-amino-1-(5-phospho-D-ribosyl)imidazole-4-carboxylate + L-aspartate + ATP = (2S)-2-[5-amino-1-(5-phospho-beta-D-ribosyl)imidazole-4-carboxamido]succinate + ADP + phosphate + 2 H(+). The protein operates within purine metabolism; IMP biosynthesis via de novo pathway; 5-amino-1-(5-phospho-D-ribosyl)imidazole-4-carboxamide from 5-amino-1-(5-phospho-D-ribosyl)imidazole-4-carboxylate: step 1/2. This Mesorhizobium japonicum (strain LMG 29417 / CECT 9101 / MAFF 303099) (Mesorhizobium loti (strain MAFF 303099)) protein is Putative phosphoribosylaminoimidazole-succinocarboxamide synthase 2 (purC2).